Here is a 424-residue protein sequence, read N- to C-terminus: UPF0229 protein PFL_5654 (424 aa).

The segment at 85 to 108 (GEHIARPQGGGGGGGGRGKAGNSG) is disordered. The segment covering 92 to 108 (QGGGGGGGGRGKAGNSG) has biased composition (gly residues).

This sequence belongs to the UPF0229 family.

This is UPF0229 protein PFL_5654 from Pseudomonas fluorescens (strain ATCC BAA-477 / NRRL B-23932 / Pf-5).